A 359-amino-acid polypeptide reads, in one-letter code: UPF0283 membrane protein RL2646 (359 aa).

The disordered stretch occupies residues 1-48; it reads MSKPPSDPPRRAPAAFIYEDEATERRDNGRQGGERRKPESFSEHIVVT. Basic and acidic residues predominate over residues 23 to 42; sequence TERRDNGRQGGERRKPESFS. Transmembrane regions (helical) follow at residues 77-97 and 111-131; these read FGKI…GLWT and LGYA…ALVI.

The protein belongs to the UPF0283 family.

It localises to the cell inner membrane. The chain is UPF0283 membrane protein RL2646 from Rhizobium johnstonii (strain DSM 114642 / LMG 32736 / 3841) (Rhizobium leguminosarum bv. viciae).